We begin with the raw amino-acid sequence, 128 residues long: Large ribosomal subunit protein bL19 (128 aa).

It belongs to the bacterial ribosomal protein bL19 family.

In terms of biological role, this protein is located at the 30S-50S ribosomal subunit interface and may play a role in the structure and function of the aminoacyl-tRNA binding site. The chain is Large ribosomal subunit protein bL19 from Mesoplasma florum (strain ATCC 33453 / NBRC 100688 / NCTC 11704 / L1) (Acholeplasma florum).